A 445-amino-acid polypeptide reads, in one-letter code: Methionine aminopeptidase 2-1 (445 aa).

The tract at residues M1–L86 is disordered. Positions G34–E46 are enriched in acidic residues. The span at A59 to G74 shows a compositional bias: basic residues. A substrate-binding site is contributed by H198. Positions 218, 229, and 298 each coordinate a divalent metal cation. Position 306 (H306) interacts with substrate. Residues E331 and E426 each coordinate a divalent metal cation.

It belongs to the peptidase M24A family. Methionine aminopeptidase eukaryotic type 2 subfamily. The cofactor is Co(2+). Zn(2+) is required as a cofactor. It depends on Mn(2+) as a cofactor. Fe(2+) serves as cofactor.

The protein resides in the cytoplasm. It carries out the reaction Release of N-terminal amino acids, preferentially methionine, from peptides and arylamides.. Cotranslationally removes the N-terminal methionine from nascent proteins. The N-terminal methionine is often cleaved when the second residue in the primary sequence is small and uncharged (Met-Ala-, Cys, Gly, Pro, Ser, Thr, or Val). In Aspergillus flavus (strain ATCC 200026 / FGSC A1120 / IAM 13836 / NRRL 3357 / JCM 12722 / SRRC 167), this protein is Methionine aminopeptidase 2-1.